Reading from the N-terminus, the 217-residue chain is Ras-related protein RABA5b (217 aa).

19–26 (GDSAVGKS) is a GTP binding site. An Effector region motif is present at residues 41–49 (SKATIGVEF). Residues 67–71 (DTAGQ), 125–128 (NKCD), and 155–156 (SA) each bind GTP. Residues Cys-214 and Cys-215 are each lipidated (S-geranylgeranyl cysteine).

It belongs to the small GTPase superfamily. Rab family.

It is found in the cell membrane. Functionally, intracellular vesicle trafficking and protein transport. The polypeptide is Ras-related protein RABA5b (RABA5B) (Arabidopsis thaliana (Mouse-ear cress)).